Reading from the N-terminus, the 247-residue chain is Adenosine 5'-phosphosulfate reductase (247 aa).

[4Fe-4S] cluster-binding residues include Cys-133, Cys-134, Cys-216, and Cys-219. Residues Lys-222–Ser-247 form a disordered region. The Nucleophile; cysteine thiosulfonate intermediate role is filled by Cys-242.

It belongs to the PAPS reductase family. CysH subfamily. Requires [4Fe-4S] cluster as cofactor.

Its subcellular location is the cytoplasm. The catalysed reaction is [thioredoxin]-disulfide + sulfite + AMP + 2 H(+) = adenosine 5'-phosphosulfate + [thioredoxin]-dithiol. It functions in the pathway sulfur metabolism; hydrogen sulfide biosynthesis; sulfite from sulfate. In terms of biological role, catalyzes the formation of sulfite from adenosine 5'-phosphosulfate (APS) using thioredoxin as an electron donor. This is Adenosine 5'-phosphosulfate reductase from Rhodococcus opacus (strain B4).